A 264-amino-acid chain; its full sequence is MIEVSGVSVRLSGKTIISDVAFTAKAGELTAIAGPNGSGKTTTMKAISGELAYGGSVRIGGDEVKGLKPWQLAAIRGVLPQASTISFPFTVREIVRMGLTSGLNLHPDKAEQTAAAALASVDLTGFEGRFYQELSGGEQQRVQLARVLCQIAEPVVDGKPCWLLLDEPVSSLDISHQLTIMTLARNFCERGGGVIAVMHDLNLTALFADRIVLMKSGRLAAPAASFEVLTDETMLSVFGLRVRINQVPADGTPFVLAHSAVSRP.

The ABC transporter domain maps to 2–241 (IEVSGVSVRL…ETMLSVFGLR (240 aa)). An ATP-binding site is contributed by 34 to 41 (GPNGSGKT).

Belongs to the ABC transporter superfamily. Heme (hemin) importer (TC 3.A.1.14.5) family. In terms of assembly, the complex is composed of two ATP-binding proteins (HmuV), two transmembrane proteins (HmuU) and a solute-binding protein (HmuT).

The protein localises to the cell inner membrane. In terms of biological role, part of the ABC transporter complex HmuTUV involved in hemin import. Responsible for energy coupling to the transport system. The sequence is that of Hemin import ATP-binding protein HmuV from Rhizobium leguminosarum.